The sequence spans 1577 residues: Dynamin-binding protein (1577 aa).

The residue at position 1 (methionine 1) is an N-acetylmethionine. 3 SH3 domains span residues 2 to 61, 66 to 126, and 145 to 204; these read EPGS…IVTI, EGER…ELCL, and YSMG…LLGP. The segment at 209–242 is disordered; the sequence is DESVNAGSGDDSTLNDEVDVSPEEVESEGDEDDQ. Residues 221-242 are compositionally biased toward acidic residues; it reads TLNDEVDVSPEEVESEGDEDDQ. Residues 243-302 form the SH3 4 domain; sequence QAGTYGIALYRFQALESNELDFEVGDKIRILGTLEDGWLEGRLKGKTGIFPHRFVKLCPS. Disordered stretches follow at residues 307 to 361 and 375 to 437; these read ETMA…EEPL and GQDE…SRQC. A compositionally biased stretch (polar residues) spans 400–410; that stretch reads PDLSQEVNGIS. Serine 494 bears the Phosphoserine mark. Disordered regions lie at residues 519 to 547 and 590 to 681; these read PERP…DNLD and RGSS…SEYT. The segment covering 617 to 626 has biased composition (low complexity); sequence TPTSTSPHLL. Over residues 632 to 651 the composition is skewed to pro residues; sequence KPGPPLVVRPSRPAPLPPPT. The segment covering 652-662 has biased composition (polar residues); it reads QQRLNTASPKP. Over residues 672-681 the composition is skewed to basic and acidic residues; sequence APEKEGSEYT. Serine 684 carries the post-translational modification Phosphoserine. Positions 705–755 form a coiled coil; the sequence is LDMHTRAQEELNLLLEEKQDESLRAETLETLKSYESTIQSLNLELQQLREM. The 184-residue stretch at 784 to 967 folds into the DH domain; sequence KRAKVVAELL…KEINANINEY (184 aa). A BAR domain is found at 1008-1217; it reads LKHLTGFAPQ…LKASDREGNL (210 aa). Residues 1285 to 1348 form the SH3 5 domain; that stretch reads PPEKLFHVQR…YSSFLKPYNP (64 aa). The span at 1353 to 1375 shows a compositional bias: low complexity; it reads SDSSVVSHSSTESEHSGSSPSFH. Disordered regions lie at residues 1353–1381 and 1415–1510; these read SDSS…NSSS and ETLG…LGSS. 2 stretches are compositionally biased toward polar residues: residues 1418–1428 and 1484–1497; these read GVSSNTGNPET and DQGS…SRAC. The region spanning 1513 to 1576 is the SH3 6 domain; the sequence is EGNQVYFAIY…PSNYIRKTEY (64 aa).

Binds DNM1 via its N-terminal SH3 domains. The C-terminal SH3 domain binds a complex containing actin, tubulin, Hsp70 and actin-regulatory proteins, such as ENAH, EVL, WIRE, CR16, WAVE1 and NAP1L1. Interacts with FASLG. Interacts (via SH3 domain 6) with WASL. Interacts (via SH3 domain 6) interacts with ENAH. Interacts (via C-terminal domain) with TJP1; required for the apical cell-cell junction localization of DNMBP. In terms of tissue distribution, widely expressed.

It localises to the cytoplasm. Its subcellular location is the golgi apparatus. The protein localises to the golgi stack. It is found in the cytoskeleton. The protein resides in the synapse. It localises to the cell junction. In terms of biological role, plays a critical role as a guanine nucleotide exchange factor (GEF) for CDC42 in several intracellular processes associated with the actin and microtubule cytoskeleton. Regulates the structure of apical junctions in epithelial cells. Participates in the normal lumenogenesis of epithelial cell cysts by regulating spindle orientation. Plays a role in ciliogenesis. May play a role in membrane trafficking between the cell surface and the Golgi. The chain is Dynamin-binding protein from Rattus norvegicus (Rat).